The sequence spans 82 residues: Putative antimicrobial peptide 7848 (82 aa).

Positions 1–17 (MNENLWAAPAPKKLSKH) are cleaved as a signal peptide. The interval 16 to 60 (KHFFGRGGPLGKETGPNLFPKKPGAGKGLGFPPTKKPRGQPRVLK) is disordered. Positions 38–82 (PGAGKGLGFPPTKKPRGQPRVLKKPKWNSEGLIGILHRGSDGVQF) are excised as a propeptide. A compositionally biased stretch (basic residues) spans 50–60 (KKPRGQPRVLK).

Belongs to the non-disulfide-bridged peptide (NDBP) superfamily. Short antimicrobial peptide (group 4) family. In terms of tissue distribution, expressed by the venom gland.

It localises to the secreted. This chain is Putative antimicrobial peptide 7848, found in Urodacus yaschenkoi (Inland robust scorpion).